Here is a 368-residue protein sequence, read N- to C-terminus: Guanylate binding protein 128up (368 aa).

Lysine 22 bears the (3S)-3-hydroxylysine mark. Residues 65–290 (ARVGFVGFPS…LLELMWEYLR (226 aa)) form the OBG-type G domain. GTP contacts are provided by residues 71–78 (GFPSVGKS), 117–121 (DLPGI), and 248–251 (NKID). Residues 290 to 366 (RLQRIYTKPK…NDEDVVQIVK (77 aa)) form the TGS domain.

Belongs to the TRAFAC class OBG-HflX-like GTPase superfamily. OBG GTPase family. Post-translationally, hydroxylated (with S stereochemistry) at C-3 of Lys-22 by JMJD7. Expressed in posterior-lateral epidermis of the maxillary lobe.

In terms of biological role, catalyzes the conversion of GTP to GDP through hydrolysis of the gamma-phosphate bond in GTP. Dfd/deformed is required to activate 128up in maxillary segment cells. The chain is Guanylate binding protein 128up from Drosophila melanogaster (Fruit fly).